Here is a 108-residue protein sequence, read N- to C-terminus: Glutaredoxin 4 (108 aa).

The Glutaredoxin domain maps to 5–107 (IKKIQNQIQN…KTISICDKLN (103 aa)). K22 contacts glutathione. C30 contacts [2Fe-2S] cluster. Glutathione-binding positions include R59, F71, and 84–85 (CN).

This sequence belongs to the glutaredoxin family. Monothiol subfamily. In terms of assembly, homodimer.

The protein localises to the cytoplasm. Monothiol glutaredoxin involved in the biogenesis of iron-sulfur clusters. In Buchnera aphidicola subsp. Baizongia pistaciae (strain Bp), this protein is Glutaredoxin 4 (grxD).